The chain runs to 161 residues: Protein-lysine N-methyltransferase (161 aa).

Positions 34-40 (DLGCGDG) match the DxGxGxG SAM-binding motif motif.

The protein belongs to the class I-like SAM-binding methyltransferase superfamily. In terms of assembly, monomer.

The enzyme catalyses L-lysyl-[protein] + S-adenosyl-L-methionine = N(6)-methyl-L-lysyl-[protein] + S-adenosyl-L-homocysteine + H(+). Its function is as follows. Catalyzes the methylation of lysine residues in target proteins, using S-adenosyl-L-methionine (SAM) as the methyl donor. Exhibits broad substrate specificity, being able to methylate the crenarchaeal chromatin protein Cren7 primarily at 'Lys-11', 'Lys-16' and 'Lys-31', as well as a number of recombinant Sulfolobus proteins in vitro. Methylates lysine residues in a rather sequence-independent manner. This Saccharolobus islandicus (strain REY15A) (Sulfolobus islandicus) protein is Protein-lysine N-methyltransferase.